Consider the following 577-residue polypeptide: Cryptochrome DASH, chloroplastic/mitochondrial (577 aa).

A chloroplast and mitochondrion-targeting transit peptide spans 1–53 (MIKQPFLLTKFTPFSSKSKHTLFTFHCNFSIKMASLTARTTPTVQNVPGLTPE). The region spanning 78 to 219 (GVAIVWFRND…GNDPGSGNTT (142 aa)) is the Photolyase/cryptochrome alpha/beta domain. The interval 550 to 577 (TKKTGDSKTAFSSRRGRPEDNRRKRHGY) is disordered.

The protein belongs to the DNA photolyase class-1 family. It depends on FAD as a cofactor. (6R)-5,10-methylene-5,6,7,8-tetrahydrofolate is required as a cofactor. As to expression, expressed in the endosperm and embryo 96 hours after seed imbibition. In the embryo, detected in the root meristem, the root cap, the shoot apical meristem and the epidermis of cotyledons. In adult plants, detcted in roots, the whole leaf lamina, the stem and in glandular trichomes.

The protein localises to the plastid. It localises to the chloroplast. Its subcellular location is the mitochondrion. Its function is as follows. May have a photoreceptor function and might bind ss- and ds-DNA in a sequence non-specific manner. Lacks photolyase activity. Has a potential role in detecting the dawn and dusk transitions and, consequently, in circadian input pathways. The protein is Cryptochrome DASH, chloroplastic/mitochondrial of Solanum lycopersicum (Tomato).